The sequence spans 78 residues: Large ribosomal subunit protein bL28 (78 aa).

The protein belongs to the bacterial ribosomal protein bL28 family.

The chain is Large ribosomal subunit protein bL28 from Legionella pneumophila (strain Paris).